A 238-amino-acid polypeptide reads, in one-letter code: Uridylate kinase (238 aa).

12–15 (KLSG) is a binding site for ATP. Residue Gly-54 coordinates UMP. Residues Gly-55 and Arg-59 each coordinate ATP. UMP is bound by residues Asp-74 and 135–142 (TGNPFFTT). ATP contacts are provided by Thr-162, Tyr-168, and Asp-171.

It belongs to the UMP kinase family. Homohexamer.

Its subcellular location is the cytoplasm. The enzyme catalyses UMP + ATP = UDP + ADP. It participates in pyrimidine metabolism; CTP biosynthesis via de novo pathway; UDP from UMP (UMPK route): step 1/1. Inhibited by UTP. Its function is as follows. Catalyzes the reversible phosphorylation of UMP to UDP. This is Uridylate kinase from Bordetella bronchiseptica (strain ATCC BAA-588 / NCTC 13252 / RB50) (Alcaligenes bronchisepticus).